Reading from the N-terminus, the 39-residue chain is Mating pheromone Er-11 (39 aa).

Cystine bridges form between Cys-3-Cys-19, Cys-10-Cys-34, and Cys-15-Cys-26.

As to quaternary structure, homodimer.

It localises to the secreted. Functionally, mating ciliate pheromones (or gamones) are diffusible extracellular communication signals that distinguish different intraspecific classes of cells commonly referred to as 'mating types'. They prepare the latter for conjugation by changing their cell surface properties. The protein is Mating pheromone Er-11 (MAT11) of Euplotes raikovi.